We begin with the raw amino-acid sequence, 83 residues long: Large ribosomal subunit protein bL27 (83 aa).

The interval 1–20 (MAHKKGASSSRNGRDSNPQY) is disordered. Polar residues predominate over residues 7–19 (ASSSRNGRDSNPQ).

The protein belongs to the bacterial ribosomal protein bL27 family.

The protein is Large ribosomal subunit protein bL27 of Bifidobacterium animalis subsp. lactis (strain AD011).